A 443-amino-acid chain; its full sequence is UPF0597 protein Dvul_2496 (443 aa).

Residues 156-178 (GMERAPEADGTLHGGASCEPSAS) form a disordered region.

It belongs to the UPF0597 family.

This is UPF0597 protein Dvul_2496 from Nitratidesulfovibrio vulgaris (strain DP4) (Desulfovibrio vulgaris).